A 376-amino-acid chain; its full sequence is Branched-chain-amino-acid aminotransferase, cytosolic (376 aa).

An N6-(pyridoxal phosphate)lysine modification is found at Lys202.

It belongs to the class-IV pyridoxal-phosphate-dependent aminotransferase family. Pyridoxal 5'-phosphate serves as cofactor.

The protein resides in the cytoplasm. The enzyme catalyses L-leucine + 2-oxoglutarate = 4-methyl-2-oxopentanoate + L-glutamate. The catalysed reaction is L-isoleucine + 2-oxoglutarate = (S)-3-methyl-2-oxopentanoate + L-glutamate. It carries out the reaction L-valine + 2-oxoglutarate = 3-methyl-2-oxobutanoate + L-glutamate. It catalyses the reaction a 2-oxocarboxylate + L-methionine = 4-methylsulfanyl-2-oxobutanoate + an L-alpha-amino acid. The protein operates within amino-acid biosynthesis; L-isoleucine biosynthesis; L-isoleucine from 2-oxobutanoate: step 4/4. It participates in amino-acid biosynthesis; L-leucine biosynthesis; L-leucine from 3-methyl-2-oxobutanoate: step 4/4. Its pathway is amino-acid biosynthesis; L-valine biosynthesis; L-valine from pyruvate: step 4/4. It functions in the pathway amino-acid biosynthesis; L-methionine biosynthesis via salvage pathway; L-methionine from S-methyl-5-thio-alpha-D-ribose 1-phosphate: step 6/6. Cytoplasmic isozyme of branched-chain-amino-acid aminotransferase, which catalyzes the first reaction in the catabolism of the essential branched chain amino acids (BCAAs) leucine, isoleucine, and valine. Catalyzes the formation of methionine from 2-keto-4-methylthiobutyrate (KMTB) in the methionine salvage pathway primarily using BCAAs (leucine, isoleucine, and valine) as well as lysine and proline as the amino donors. Involved in cell cycle regulation. The chain is Branched-chain-amino-acid aminotransferase, cytosolic from Saccharomyces cerevisiae (strain ATCC 204508 / S288c) (Baker's yeast).